Here is a 113-residue protein sequence, read N- to C-terminus: Urocortin-2 (113 aa).

The signal sequence occupies residues 1–23 (MMTRWALVVFVVLMLDRILFVPG). Positions 24–71 (TPIPTFQLLPQNSLETTPSSVTSESSSGTTTGPSASWSNSKASPYLDT) are excised as a propeptide. A compositionally biased stretch (low complexity) spans 37–61 (LETTPSSVTSESSSGTTTGPSASWS). Residues 37 to 64 (LETTPSSVTSESSSGTTTGPSASWSNSK) are disordered. V110 carries the post-translational modification Valine amide; partial.

Belongs to the sauvagine/corticotropin-releasing factor/urotensin I family. As to quaternary structure, binds with high affinity to CRF receptors 2-alpha and 2-beta. Post-translationally, glycosylated.

The protein resides in the secreted. Its function is as follows. Suppresses food intake, delays gastric emptying and decreases heat-induced edema. Might represent an endogenous ligand for maintaining homeostasis after stress. The sequence is that of Urocortin-2 (Ucn2) from Mus musculus (Mouse).